We begin with the raw amino-acid sequence, 343 residues long: Phospholipid phosphatase-related protein type 2 (343 aa).

The next 3 helical transmembrane spans lie at 12–32 (FSII…VILL), 69–89 (VPPA…ILLG), and 129–149 (FLGV…AGQV). Asparagine 165 carries an N-linked (GlcNAc...) asparagine glycan. The next 3 membrane-spanning stretches (helical) occupy residues 210–230 (AALC…VFRV), 239–259 (SLCL…VAEY), and 266–286 (VLAG…CVVH). Positions 290 to 343 (SRPPSGRRLSPWEDLGQAPTMDSPLEKNPRSAGRIRHRHGSPHPSRRTAPAVAT) are disordered. A phosphoserine mark is found at serine 299 and serine 312. Over residues 322–335 (GRIRHRHGSPHPSR) the composition is skewed to basic residues.

This sequence belongs to the PA-phosphatase related phosphoesterase family.

The protein resides in the membrane. The sequence is that of Phospholipid phosphatase-related protein type 2 from Homo sapiens (Human).